We begin with the raw amino-acid sequence, 163 residues long: Phosphopantetheine adenylyltransferase (163 aa).

Thr-9 contacts substrate. Residues 9–10 (TF) and His-17 contribute to the ATP site. Substrate is bound by residues Lys-41, Leu-73, and Arg-87. ATP contacts are provided by residues 88–90 (GLR), Glu-98, and 123–129 (YQFISGT).

This sequence belongs to the bacterial CoaD family. In terms of assembly, homohexamer. Requires Mg(2+) as cofactor.

Its subcellular location is the cytoplasm. The catalysed reaction is (R)-4'-phosphopantetheine + ATP + H(+) = 3'-dephospho-CoA + diphosphate. It functions in the pathway cofactor biosynthesis; coenzyme A biosynthesis; CoA from (R)-pantothenate: step 4/5. Reversibly transfers an adenylyl group from ATP to 4'-phosphopantetheine, yielding dephospho-CoA (dPCoA) and pyrophosphate. The sequence is that of Phosphopantetheine adenylyltransferase from Herminiimonas arsenicoxydans.